A 537-amino-acid polypeptide reads, in one-letter code: uncharacterized protein (537 aa).

This is an uncharacterized protein from Methanocaldococcus jannaschii (strain ATCC 43067 / DSM 2661 / JAL-1 / JCM 10045 / NBRC 100440) (Methanococcus jannaschii).